A 37-amino-acid polypeptide reads, in one-letter code: Desulforedoxin (37 aa).

Residues Cys10, Cys13, Cys29, and Cys30 each coordinate Fe cation.

It to the N-terminal section of desulfoferrodoxin. Homodimer. The cofactor is Fe cation.

Nonheme iron protein possibly involved in electron transport. The protein is Desulforedoxin (dsr) of Megalodesulfovibrio gigas (Desulfovibrio gigas).